Reading from the N-terminus, the 190-residue chain is Prostaglandin-H2 D-isomerase (190 aa).

An N-terminal signal peptide occupies residues 1 to 22 (MATHHTLWMGLVLLGLLGGLQA). Residue asparagine 51 is glycosylated (N-linked (GlcNAc...) asparagine). Cysteine 65 acts as the Nucleophile in catalysis. N-linked (GlcNAc...) asparagine glycosylation is present at asparagine 78. A disulfide bridge connects residues cysteine 89 and cysteine 186.

It belongs to the calycin superfamily. Lipocalin family. Monomer.

Its subcellular location is the rough endoplasmic reticulum. The protein resides in the nucleus membrane. It localises to the golgi apparatus. It is found in the cytoplasm. The protein localises to the perinuclear region. Its subcellular location is the secreted. It carries out the reaction prostaglandin H2 = prostaglandin D2. Functionally, catalyzes the conversion of PGH2 to PGD2, a prostaglandin involved in smooth muscle contraction/relaxation and a potent inhibitor of platelet aggregation. Involved in a variety of CNS functions, such as sedation, NREM sleep and PGE2-induced allodynia, and may have an anti-apoptotic role in oligodendrocytes. Binds small non-substrate lipophilic molecules, including biliverdin, bilirubin, retinal, retinoic acid and thyroid hormone, and may act as a scavenger for harmful hydrophobic molecules and as a secretory retinoid and thyroid hormone transporter. Possibly involved in development and maintenance of the blood-brain, blood-retina, blood-aqueous humor and blood-testis barrier. It is likely to play important roles in both maturation and maintenance of the central nervous system and male reproductive system. Involved in PLA2G3-dependent maturation of mast cells. PLA2G3 is secreted by immature mast cells and acts on nearby fibroblasts upstream to PTDGS to synthesize PGD2, which in turn promotes mast cell maturation and degranulation via PTGDR. The chain is Prostaglandin-H2 D-isomerase (PTGDS) from Macaca fuscata fuscata (Japanese macaque).